The sequence spans 220 residues: Glutathione S-transferase U26 (220 aa).

Residues 4–83 (DQVILLDYWP…YIDEVWSDAS (80 aa)) enclose the GST N-terminal domain. Glutathione contacts are provided by residues 14 to 15 (SM), 40 to 41 (VK), 54 to 55 (KI), and 67 to 68 (ES). Positions 89 to 210 (DPYQKSRARF…ADSDRIIEYV (122 aa)) constitute a GST C-terminal domain.

It belongs to the GST superfamily. Tau family.

Its subcellular location is the cytoplasm. The protein resides in the cytosol. It carries out the reaction RX + glutathione = an S-substituted glutathione + a halide anion + H(+). Its function is as follows. In vitro, possesses glutathione S-transferase activity toward 1-chloro-2,4-dinitrobenzene (CDNB). May be involved in the conjugation of reduced glutathione to a wide number of exogenous and endogenous hydrophobic electrophiles and have a detoxification role against certain herbicides. The protein is Glutathione S-transferase U26 (GSTU26) of Arabidopsis thaliana (Mouse-ear cress).